A 268-amino-acid chain; its full sequence is Chymotrypsin-C (268 aa).

The N-terminal stretch at methionine 1–serine 16 is a signal peptide. Positions cysteine 17–arginine 29 are cleaved as a propeptide — activation peptide. 5 disulfides stabilise this stretch: cysteine 17/cysteine 141, cysteine 59/cysteine 75, cysteine 155/cysteine 222, cysteine 186/cysteine 202, and cysteine 212/cysteine 243. Asparagine 25 is a glycosylation site (N-linked (GlcNAc...) asparagine). The Peptidase S1 domain occupies valine 30–leucine 268. Catalysis depends on charge relay system residues histidine 74 and aspartate 121. Serine 216 functions as the Charge relay system in the catalytic mechanism.

This sequence belongs to the peptidase S1 family. Elastase subfamily. In terms of assembly, monomer. The zymogen is secreted as a ternary complex composed of procarboxypeptidase A, chymotrypsinogen C and proproteinase E. In terms of tissue distribution, pancreas.

The protein resides in the secreted. Its subcellular location is the extracellular space. The enzyme catalyses Preferential cleavage: Leu-|-Xaa, Tyr-|-Xaa, Phe-|-Xaa, Met-|-Xaa, Trp-|-Xaa, Gln-|-Xaa, Asn-|-Xaa.. Regulates activation and degradation of trypsinogens and procarboxypeptidases by targeting specific cleavage sites within their zymogen precursors. Has chymotrypsin-type protease activity and hypocalcemic activity. The protein is Chymotrypsin-C (CTRC) of Bos taurus (Bovine).